A 228-amino-acid polypeptide reads, in one-letter code: ATP-dependent dethiobiotin synthetase BioD (228 aa).

13–18 (DIGKTF) contacts ATP. T17 lines the Mg(2+) pocket. The active site involves K38. S42 lines the substrate pocket. ATP contacts are provided by residues D55, 116 to 119 (EGSG), 179 to 180 (NK), and 208 to 210 (PKI). 2 residues coordinate Mg(2+): D55 and E116.

This sequence belongs to the dethiobiotin synthetase family. As to quaternary structure, homodimer. It depends on Mg(2+) as a cofactor.

The protein localises to the cytoplasm. It catalyses the reaction (7R,8S)-7,8-diammoniononanoate + CO2 + ATP = (4R,5S)-dethiobiotin + ADP + phosphate + 3 H(+). Its pathway is cofactor biosynthesis; biotin biosynthesis; biotin from 7,8-diaminononanoate: step 1/2. Functionally, catalyzes a mechanistically unusual reaction, the ATP-dependent insertion of CO2 between the N7 and N8 nitrogen atoms of 7,8-diaminopelargonic acid (DAPA, also called 7,8-diammoniononanoate) to form a ureido ring. This is ATP-dependent dethiobiotin synthetase BioD from Clostridium perfringens (strain ATCC 13124 / DSM 756 / JCM 1290 / NCIMB 6125 / NCTC 8237 / Type A).